We begin with the raw amino-acid sequence, 722 residues long: Polyribonucleotide nucleotidyltransferase (722 aa).

Mg(2+) contacts are provided by aspartate 487 and aspartate 493. Residues 554 to 613 (PRIETFKIPTDKIREVIGTGGKVIREIVEKTGAKVNIEDDGTVKVASSDGESIKAAIKWI) enclose the KH domain. An S1 motif domain is found at 623–691 (GEIYEGTVVK…DRGKTRLSMK (69 aa)). Positions 697–722 (TGEDLEAKQKAEAKAEGEAPAQAAGE) are disordered. Over residues 701–713 (LEAKQKAEAKAEG) the composition is skewed to basic and acidic residues.

Belongs to the polyribonucleotide nucleotidyltransferase family. Mg(2+) is required as a cofactor.

It localises to the cytoplasm. It catalyses the reaction RNA(n+1) + phosphate = RNA(n) + a ribonucleoside 5'-diphosphate. Involved in mRNA degradation. Catalyzes the phosphorolysis of single-stranded polyribonucleotides processively in the 3'- to 5'-direction. This Rhodopseudomonas palustris (strain TIE-1) protein is Polyribonucleotide nucleotidyltransferase.